The chain runs to 124 residues: uncharacterized protein (124 aa).

It belongs to the asfivirus H124R family.

The protein resides in the virion. This is an uncharacterized protein from Ornithodoros (relapsing fever ticks).